The sequence spans 242 residues: MDIKLKDFEGPLDLLLHLVSKYQMDIYDVPITEVIEQYLAYVSTLQAMRLEVTGEYMVMASQLMLIKSRKLLPKVAEVTDLGDDLEQDLLSQIEEYRKFKLLGEHLEAKHQERAQYYSKAPTELIYEDAELVHDKTTIDLFLAFSNILAKKKEEFAQNHTTILRDEYKIEDMMIIVKESLIGRDQLRLQDLFKEAQNVQEIITLFLATLELIKTQELILVQEESFGDIYLMEKKEESQVPQS.

The protein belongs to the ScpA family. In terms of assembly, component of a cohesin-like complex composed of ScpA, ScpB and the Smc homodimer, in which ScpA and ScpB bind to the head domain of Smc. The presence of the three proteins is required for the association of the complex with DNA.

It is found in the cytoplasm. Its function is as follows. Participates in chromosomal partition during cell division. May act via the formation of a condensin-like complex containing Smc and ScpB that pull DNA away from mid-cell into both cell halves. The polypeptide is Segregation and condensation protein A (Streptococcus pneumoniae serotype 19F (strain G54)).